Here is a 138-residue protein sequence, read N- to C-terminus: Acid shock protein (138 aa).

The N-terminal stretch at 1 to 21 (MKKVLALIVAATMGLSSVAFA) is a signal peptide. A propeptide spanning residues 22 to 85 (ADAVAPAAAA…TKKAPAQKAQ (64 aa)) is cleaved from the precursor. Low complexity predominate over residues 31–50 (APAATTTAAPAAAATKAPAK). The segment at 31-138 (APAATTTAAP…ATKKAAPAAK (108 aa)) is disordered. Basic residues-rich tracts occupy residues 51 to 77 (ATHH…KATK) and 122 to 131 (AAKKHHKATK).

This sequence belongs to the Asr family. In terms of processing, proteolytic processing gives rise to the active protein.

The protein resides in the periplasm. Required for growth and/or survival at acidic conditions. This chain is Acid shock protein, found in Serratia proteamaculans (strain 568).